Reading from the N-terminus, the 275-residue chain is Large ribosomal subunit protein uL2 (275 aa).

2 disordered regions span residues 1-24 and 208-275; these read MGIRSFRPYTPGTRQATVSDFSEI and AGRT…RRRR. The span at 12–22 shows a compositional bias: polar residues; it reads GTRQATVSDFS. Basic residues-rich tracts occupy residues 208 to 219 and 255 to 275; these read AGRTRHLGRRPQ and LGKKTRKKKKQSSSLIVRRRR.

The protein belongs to the universal ribosomal protein uL2 family. Part of the 50S ribosomal subunit. Forms a bridge to the 30S subunit in the 70S ribosome.

Functionally, one of the primary rRNA binding proteins. Required for association of the 30S and 50S subunits to form the 70S ribosome, for tRNA binding and peptide bond formation. It has been suggested to have peptidyltransferase activity; this is somewhat controversial. Makes several contacts with the 16S rRNA in the 70S ribosome. The sequence is that of Large ribosomal subunit protein uL2 from Picosynechococcus sp. (strain ATCC 27264 / PCC 7002 / PR-6) (Agmenellum quadruplicatum).